Reading from the N-terminus, the 91-residue chain is MKKLFAALALAAVVAPVWAATQTVTLSVPGMTCSTCPITVKKAISKVEGVSKIDVTFETREAVVTFDDAKTSVQKLTKATGDAGYPSSVKQ.

An N-terminal signal peptide occupies residues 1–19 (MKKLFAALALAAVVAPVWA). The HMA domain maps to 22 to 88 (QTVTLSVPGM…ATGDAGYPSS (67 aa)). 2 residues coordinate Hg(2+): cysteine 33 and cysteine 36.

Belongs to the MerP family. Monomer.

The protein localises to the periplasm. Its function is as follows. Involved in mercury resistance. Acts as a mercury scavenger that specifically binds to a mercuric ion in the periplasm and probably passes it to the cytoplasmic mercuric reductase MerA via the mercuric transport protein MerT. The polypeptide is Mercuric transport protein periplasmic component (merP) (Alcaligenes sp).